Consider the following 322-residue polypeptide: Mitochondrial glutamate carrier 1 (322 aa).

3 Solcar repeats span residues 6 to 93 (ISLP…FRYQ), 101 to 214 (LTLF…LNEL), and 223 to 312 (SPFY…GIAE). 6 helical membrane-spanning segments follow: residues 12–32 (LING…IDLA), 62–82 (YFGM…EKAI), 107–127 (MLAG…MEML), 189–209 (GLGA…PLFA), 223–243 (SPFY…AVAV), and 292–312 (ALVI…GIAE).

This sequence belongs to the mitochondrial carrier (TC 2.A.29) family.

The protein localises to the mitochondrion inner membrane. It catalyses the reaction L-glutamate(in) + H(+)(in) = L-glutamate(out) + H(+)(out). Functionally, mitochondrial glutamate/H(+) symporter. Responsible for the transport of glutamate from the cytosol into the mitochondrial matrix with the concomitant import of a proton. Plays a role in the control of glucose-stimulated insulin secretion. The chain is Mitochondrial glutamate carrier 1 (SLC25A22) from Bos taurus (Bovine).